Consider the following 21-residue polypeptide: Peptide PGLa-R4 (21 aa).

Leucine 21 carries the post-translational modification Leucine amide.

Expressed by the skin glands.

The protein localises to the secreted. In terms of biological role, antimicrobial peptide. This Xenopus ruwenzoriensis (Uganda clawed frog) protein is Peptide PGLa-R4.